Reading from the N-terminus, the 505-residue chain is RNA-splicing ligase RtcB homolog (505 aa).

Mn(2+) contacts are provided by Asp119, Cys122, His227, and His259. GMP is bound at residue 226–230 (NHYAE). Ser300 bears the Phosphoserine mark. His353 contacts Mn(2+). GMP is bound by residues 353–354 (HN), 402–405 (GGTM), Ser409, and 428–431 (HGAG). The active-site GMP-histidine intermediate is the His428. Lys496 participates in a covalent cross-link: Glycyl lysine isopeptide (Lys-Gly) (interchain with G-Cter in SUMO2). Residue Lys504 coordinates GMP.

This sequence belongs to the RtcB family. In terms of assembly, catalytic component of the tRNA-splicing ligase complex. Mn(2+) is required as a cofactor.

It localises to the nucleus. The protein localises to the cytoplasm. It carries out the reaction a 3'-end 3'-phospho-ribonucleotide-RNA + a 5'-end dephospho-ribonucleoside-RNA + GTP = a ribonucleotidyl-ribonucleotide-RNA + GMP + diphosphate. The catalysed reaction is a 3'-end 2',3'-cyclophospho-ribonucleotide-RNA + a 5'-end dephospho-ribonucleoside-RNA + GTP + H2O = a ribonucleotidyl-ribonucleotide-RNA + GMP + diphosphate + H(+). With respect to regulation, protein archease stimulates the activity of the tRNA ligase complex with high efficiency in the presence of GTP. In terms of biological role, catalytic subunit of the tRNA-splicing ligase complex that acts by directly joining spliced tRNA halves to mature-sized tRNAs by incorporating the precursor-derived splice junction phosphate into the mature tRNA as a canonical 3',5'-phosphodiester. May act as an RNA ligase with broad substrate specificity, and may function toward other RNAs. The sequence is that of RNA-splicing ligase RtcB homolog from Homo sapiens (Human).